The chain runs to 110 residues: Secreted Ly-6/uPAR-related protein 1 (110 aa).

Residues 1–22 (MTLRWAMWLLLLAAWSMGYGEA) form the signal peptide. The region spanning 24–73 (RCYTCEQPTAINSCKNIAQCKMEDTACKTVLETVEAAFPFNHSPMVTRSC) is the UPAR/Ly6 domain. Cystine bridges form between Cys-25–Cys-50, Cys-28–Cys-37, Cys-43–Cys-73, Cys-77–Cys-93, and Cys-94–Cys-99.

Homodimer. Interacts with PLAU. Interacts with CHRNA7. Expressed in skin, eye, whole lung, trachea, esophagus and stomach. Widely expressed in various tissues including spleen and thymus but not pancreas. Expressed in macrophages, dendritic cells, T and B cells. Expressed in lung specifically in ciliated bronchial epithelial cells (at protein level). Expression is decreased in lungs of asthmatic model mice. Expressed in the cornea.

It localises to the secreted. Its function is as follows. Has an antitumor activity. Was found to be a marker of late differentiation of the skin. Implicated in maintaining the physiological and structural integrity of the keratinocyte layers of the skin. In vitro down-regulates keratinocyte proliferation; the function may involve the proposed role as modulator of nicotinic acetylcholine receptors (nAChRs) activity. In vitro inhibits alpha-7-dependent nAChR currents in an allosteric manner. In T cells may be involved in regulation of intracellular Ca(2+) signaling. Seems to have a immunomodulatory function in the cornea. The function may implicate a possible role as a scavenger receptor for PLAU thereby blocking PLAU-dependent functions of PLAUR such as in cell migration and proliferation. This Mus musculus (Mouse) protein is Secreted Ly-6/uPAR-related protein 1 (Slurp1).